Reading from the N-terminus, the 245-residue chain is Alpha carbonic anhydrase 2 (245 aa).

The first 23 residues, 1–23 (MDKISIRCFIFLVLTSFVTTVSC), serve as a signal peptide directing secretion. The region spanning 37–245 (HEFSYEWNQE…THRYFLLFFT (209 aa)) is the Alpha-carbonic anhydrase domain. A disulfide bridge links Cys62 with Cys222. Asn95 carries N-linked (GlcNAc...) asparagine glycosylation. Catalysis depends on His103, which acts as the Proton acceptor. Asn120 is a glycosylation site (N-linked (GlcNAc...) asparagine). Zn(2+) is bound by residues His130, His132, and His149. Asn156 carries an N-linked (GlcNAc...) asparagine glycan. A substrate-binding site is contributed by 218–219 (TT).

This sequence belongs to the alpha-class carbonic anhydrase family. Zn(2+) serves as cofactor. N-glycosylated. As to expression, expressed in stems and roots.

The protein localises to the plastid. The protein resides in the chloroplast stroma. The enzyme catalyses hydrogencarbonate + H(+) = CO2 + H2O. In terms of biological role, reversible hydration of carbon dioxide. The protein is Alpha carbonic anhydrase 2 (ACA2) of Arabidopsis thaliana (Mouse-ear cress).